Reading from the N-terminus, the 158-residue chain is MLAMKLFTCFLQVLAGLAVHSQGALSAGNNSTEMEVVPFNEVWGRSYCRPMEKLVYIADEHPNEVSHIFSPSCVLLSRCSGCCGDEGLHCVALKTANITMQILKIPPNRDPHSYVEMTFSQDVLCECRPILETTKAERRKTKGKRKQSKTPQTEEPHL.

Residues 1-23 (MLAMKLFTCFLQVLAGLAVHSQG) constitute a signal peptide (or 26). N-linked (GlcNAc...) asparagine glycosylation is found at N29 and N30. Cystine bridges form between C48-C90, C79-C125, and C83-C127. An N-linked (GlcNAc...) asparagine glycan is attached at N97. Positions 136 to 158 (AERRKTKGKRKQSKTPQTEEPHL) are disordered. Residues 137-148 (ERRKTKGKRKQS) are compositionally biased toward basic residues.

It belongs to the PDGF/VEGF growth factor family. In terms of assembly, antiparallel homodimer; disulfide-linked. Also found as heterodimer with VEGFA/VEGF.

Its subcellular location is the secreted. Its function is as follows. Growth factor active in angiogenesis and endothelial cell growth, stimulating their proliferation and migration. It binds to the receptor FLT1/VEGFR-1. Also promotes cell tumor growth. The polypeptide is Placenta growth factor (Pgf) (Rattus norvegicus (Rat)).